We begin with the raw amino-acid sequence, 476 residues long: Bifunctional protein HldE (476 aa).

The ribokinase stretch occupies residues 1–319; the sequence is MKITLPEYDK…ANAVYSQQEI (319 aa). ATP is bound at residue 196–199; the sequence is NLAE. Asp-265 is a catalytic residue. The tract at residues 345–476 is cytidylyltransferase; it reads MTNGCFDILH…EIIKTIRNNS (132 aa).

This sequence in the N-terminal section; belongs to the carbohydrate kinase PfkB family. The protein in the C-terminal section; belongs to the cytidylyltransferase family. In terms of assembly, homodimer.

It catalyses the reaction D-glycero-beta-D-manno-heptose 7-phosphate + ATP = D-glycero-beta-D-manno-heptose 1,7-bisphosphate + ADP + H(+). The catalysed reaction is D-glycero-beta-D-manno-heptose 1-phosphate + ATP + H(+) = ADP-D-glycero-beta-D-manno-heptose + diphosphate. It participates in nucleotide-sugar biosynthesis; ADP-L-glycero-beta-D-manno-heptose biosynthesis; ADP-L-glycero-beta-D-manno-heptose from D-glycero-beta-D-manno-heptose 7-phosphate: step 1/4. Its pathway is nucleotide-sugar biosynthesis; ADP-L-glycero-beta-D-manno-heptose biosynthesis; ADP-L-glycero-beta-D-manno-heptose from D-glycero-beta-D-manno-heptose 7-phosphate: step 3/4. Catalyzes the phosphorylation of D-glycero-D-manno-heptose 7-phosphate at the C-1 position to selectively form D-glycero-beta-D-manno-heptose-1,7-bisphosphate. In terms of biological role, catalyzes the ADP transfer from ATP to D-glycero-beta-D-manno-heptose 1-phosphate, yielding ADP-D-glycero-beta-D-manno-heptose. The polypeptide is Bifunctional protein HldE (Psychromonas ingrahamii (strain DSM 17664 / CCUG 51855 / 37)).